The primary structure comprises 160 residues: Crossover junction endodeoxyribonuclease RuvC (160 aa).

Catalysis depends on residues Asp-7, Glu-70, and Asp-142. 3 residues coordinate Mg(2+): Asp-7, Glu-70, and Asp-142.

This sequence belongs to the RuvC family. Homodimer which binds Holliday junction (HJ) DNA. The HJ becomes 2-fold symmetrical on binding to RuvC with unstacked arms; it has a different conformation from HJ DNA in complex with RuvA. In the full resolvosome a probable DNA-RuvA(4)-RuvB(12)-RuvC(2) complex forms which resolves the HJ. Mg(2+) is required as a cofactor.

It localises to the cytoplasm. It catalyses the reaction Endonucleolytic cleavage at a junction such as a reciprocal single-stranded crossover between two homologous DNA duplexes (Holliday junction).. Functionally, the RuvA-RuvB-RuvC complex processes Holliday junction (HJ) DNA during genetic recombination and DNA repair. Endonuclease that resolves HJ intermediates. Cleaves cruciform DNA by making single-stranded nicks across the HJ at symmetrical positions within the homologous arms, yielding a 5'-phosphate and a 3'-hydroxyl group; requires a central core of homology in the junction. The consensus cleavage sequence is 5'-(A/T)TT(C/G)-3'. Cleavage occurs on the 3'-side of the TT dinucleotide at the point of strand exchange. HJ branch migration catalyzed by RuvA-RuvB allows RuvC to scan DNA until it finds its consensus sequence, where it cleaves and resolves the cruciform DNA. In Ehrlichia ruminantium (strain Gardel), this protein is Crossover junction endodeoxyribonuclease RuvC.